Consider the following 292-residue polypeptide: AKT-interacting protein (292 aa).

The segment at 1 to 63 is disordered; that stretch reads MNPLWSMSAG…TSPAPAAQST (63 aa). Residues 14–23 are compositionally biased toward basic and acidic residues; it reads KRAEGEEKTL. Serine 30 carries the phosphoserine modification. A UBC core domain is found at 74–222; sequence YLEYSLLAEF…VVDSVKVCTA (149 aa).

It belongs to the ubiquitin-conjugating enzyme family. FTS subfamily. In terms of assembly, component of the FTS/Hook/FHIP complex (FHF complex), composed of AKTIP/FTS, FHIP1B, and one or more members of the Hook family of proteins HOOK1, HOOK2, and HOOK3. Interacts directly with HOOK1, HOOK2 and HOOK3. The FHF complex associates with the homotypic vesicular sorting complex (the HOPS complex). Also interacts with AKT1. May interact with FHIP1A. As to expression, ubiquitous. Highest expression in kidney, testis and brain and lowest in spleen and liver.

The protein resides in the cytoplasm. It localises to the cell membrane. Component of the FTS/Hook/FHIP complex (FHF complex). The FHF complex may function to promote vesicle trafficking and/or fusion via the homotypic vesicular protein sorting complex (the HOPS complex). Regulates apoptosis by enhancing phosphorylation and activation of AKT1. Increases release of TNFSF6 via the AKT1/GSK3B/NFATC1 signaling cascade. FHF complex promotes the distribution of AP-4 complex to the perinuclear area of the cell. The protein is AKT-interacting protein (Aktip) of Mus musculus (Mouse).